Consider the following 321-residue polypeptide: Olfactory receptor 56B34 (321 aa).

At 1 to 36 the chain is on the extracellular side; sequence MGTALHETNSSEVHVSEFILLGFPGIHEFQIWLSLP. A helical membrane pass occupies residues 37–57; the sequence is MALLYIVALGANLLILITIYL. Topologically, residues 58–70 are cytoplasmic; the sequence is EPTLHQPMYQFLG. The helical transmembrane segment at 71-91 threads the bilayer; it reads ILAAVDIGLATTSMPKILAIL. The Extracellular portion of the chain corresponds to 92–105; that stretch reads WFDAKTISLPECFA. The cysteines at positions 103 and 185 are disulfide-linked. The helical transmembrane segment at 106-126 threads the bilayer; that stretch reads QIYAIHTFMCMESGVFLCMAI. Topologically, residues 127 to 128 are cytoplasmic; that stretch reads DR. A helical transmembrane segment spans residues 129 to 149; it reads YVAICYPLQYPSIVTEAFVIK. Over 150 to 207 the chain is Extracellular; that stretch reads ATLSMLLRNGLLTIPVPVLAAQRQYCSRNEIDHCLCSNLGVISLACDDITVNRFYQLA. Residues 208-228 traverse the membrane as a helical segment; sequence LAWLVVGSDMILVYASYALII. Topologically, residues 229-250 are cytoplasmic; sequence RSVLRLNSTEAASKALSTCSSH. Residues 251 to 271 traverse the membrane as a helical segment; it reads LILIMFYYTAIVIVSVTHLAG. Residues 272-275 lie on the Extracellular side of the membrane; that stretch reads RRVP. A helical transmembrane segment spans residues 276-296; the sequence is LIPVLLNVMHIVIPPSLNPVV. Residues 297 to 321 lie on the Cytoplasmic side of the membrane; it reads YALRTQELKVGFRKVFSLSEFVSRK.

The protein belongs to the G-protein coupled receptor 1 family.

The protein localises to the cell membrane. Functionally, odorant receptor. The chain is Olfactory receptor 56B34 from Mus musculus (Mouse).